We begin with the raw amino-acid sequence, 778 residues long: DISP complex protein LRCH3 (778 aa).

LRR repeat units lie at residues 56–79 (AAVT…AANH), 81–104 (LTDT…ACHF), 105–127 (VSLE…VLNL), 128–150 (QALT…LCNL), 152–172 (LKVL…IGHL), 173–195 (RHLT…IGNL), 197–218 (ALRD…LAEV), 220–239 (LIRL…CYRN), 240–264 (LRHL…CIKG), and 266–290 (IHIF…ERRP). The tract at residues 56–290 (AAVTGVLSLS…PDLPDYERRP (235 aa)) is mediates interaction with DOCK7. 3 positions are modified to phosphoserine: Ser324, Ser415, and Ser419. Residues 382–642 (TTEEEENDVK…PATDPTDAIT (261 aa)) form a mediates direct interaction with MYO6 region. The tract at residues 511 to 536 (QKASHNPQRQQPPGNGECSFPSRRSQ) is disordered. The span at 514-523 (SHNPQRQQPP) shows a compositional bias: polar residues. 2 positions are modified to phosphoserine: Ser608 and Ser625. Residues 645–758 (REEELKLIDQ…VTVQALLELA (114 aa)) enclose the Calponin-homology (CH) domain. The disordered stretch occupies residues 758 to 778 (APPKQPPPQQPQQQQPQLSAV). Residues 768-778 (PQQQQPQLSAV) are compositionally biased toward low complexity.

Component of the DOCK7-induced septin displacement/DISP complex, at least composed of DOCK7, LRCH3 and MYO6.

The protein resides in the cytoplasm. In terms of biological role, as part of the DISP complex, may regulate the association of septins with actin and thereby regulate the actin cytoskeleton. This is DISP complex protein LRCH3 from Mus musculus (Mouse).